A 485-amino-acid polypeptide reads, in one-letter code: Cholesterol 16,22-dihydroxylase CYP90G4 (485 aa).

Residues 4-24 (VVILFFLFPTLLVLVVAVLGL) form a helical membrane-spanning segment. Position 432 (cysteine 432) interacts with heme.

It belongs to the cytochrome P450 family. Mainly expressed in leaves and, at low levels, in roots and stems.

It localises to the membrane. It catalyses the reaction cholesterol + 2 reduced [NADPH--hemoprotein reductase] + 2 O2 = (16S,22S)-dihydroxycholesterol + 2 oxidized [NADPH--hemoprotein reductase] + 2 H2O + 2 H(+). It participates in steroid metabolism; cholesterol metabolism. Involved in the biosynthesis of spiroketal steroid and saponin natural products from cholesterol such as diosgenin and analogs (e.g. furostanol and spirostanol), plant defense compounds used as main precursors for the industrial production of steroid hormones. During the 5,6-spiroketalization of cholesterol, catalyzes the hydroxylation of cholesterol to form 16S,22S-dihydroxycholesterol and, possibly, the subsequent conversion of 16S,22S-dihydroxycholesterol into 16-oxo-22-hydroxy-cholesterol and 16-hydroxy-22-oxo-cholesterol. 16-hydroxy-22-oxo-cholesterol submit a spontaneous reaction leading to the production of furostanol-type steroid diastereomers, precursors of diosgenin. This Paris polyphylla (Daiswa polyphylla) protein is Cholesterol 16,22-dihydroxylase CYP90G4.